A 402-amino-acid chain; its full sequence is Zinc finger CCCH domain-containing protein 35 (402 aa).

2 consecutive C3H1-type zinc fingers follow at residues 117–144 and 152–176; these read CYSG…HGVF and RYRT…HTPD. 2 disordered regions span residues 180 to 211 and 232 to 258; these read VLPP…AESY and SSPT…DAAG. A compositionally biased stretch (polar residues) spans 183 to 192; the sequence is PSQQQGSNSP. Residues 232–241 are compositionally biased toward low complexity; it reads SSPTSTLVSP. Pro residues predominate over residues 242 to 253; the sequence is PRSPPSESPPLS.

In Oryza sativa subsp. japonica (Rice), this protein is Zinc finger CCCH domain-containing protein 35.